A 95-amino-acid chain; its full sequence is UPF0125 protein BUsg_244 (95 aa).

Belongs to the UPF0125 (RnfH) family.

The protein is UPF0125 protein BUsg_244 of Buchnera aphidicola subsp. Schizaphis graminum (strain Sg).